The chain runs to 405 residues: MSDVKRVVLAFSGGLDTSVILKWLQQTYQCEVVTFTADLGQGEELEPARAKAKLMGVPDEHIFIDDLREEFVKDYVFPMMRGNALYEGLYLLGTSIARPLIAKRQIEIARAVGADAVSHGATGKGNDQVRFELGYYGLAPDIRVIAPWREWDLTSRTALIDFAEKHQIPVPKDKRGESPFSTDANLLHTSSEGKVLEDPWEEVPDYVYSRTVNPEDAPDQPEIITIDFERGDGVALNGEGMSPATLLTALNELGRKHGIGRLDLVENRFVGMKSRGMYETPGGAIYHLAHRGIEQITLDRGAAHLKDELAPRYAELIYNGFWFSPEREMLQAAIDHSQEKVTGTVRLKLYKGGVHVIGRKSPYTLYSEKVVTFEDDAGAYDQRDAAGFIKLNALRLRLLGRRDGR.

ATP-binding positions include 10–18 (AFSGGLDTS) and alanine 37. Residues tyrosine 90 and serine 95 each contribute to the L-citrulline site. Glycine 120 is a binding site for ATP. The L-aspartate site is built by threonine 122, asparagine 126, and aspartate 127. Asparagine 126 is an L-citrulline binding site. L-citrulline is bound by residues arginine 130, serine 181, serine 190, glutamate 266, and tyrosine 278.

The protein belongs to the argininosuccinate synthase family. Type 1 subfamily. As to quaternary structure, homotetramer.

It localises to the cytoplasm. It carries out the reaction L-citrulline + L-aspartate + ATP = 2-(N(omega)-L-arginino)succinate + AMP + diphosphate + H(+). It participates in amino-acid biosynthesis; L-arginine biosynthesis; L-arginine from L-ornithine and carbamoyl phosphate: step 2/3. This Rhizorhabdus wittichii (strain DSM 6014 / CCUG 31198 / JCM 15750 / NBRC 105917 / EY 4224 / RW1) (Sphingomonas wittichii) protein is Argininosuccinate synthase.